The primary structure comprises 276 residues: NH(3)-dependent NAD(+) synthetase (276 aa).

ATP is bound at residue 43 to 50 (GISGGVDS). D49 lines the Mg(2+) pocket. R146 is a deamido-NAD(+) binding site. T166 contacts ATP. Position 171 (E171) interacts with Mg(2+). 2 residues coordinate deamido-NAD(+): K179 and D186. ATP contacts are provided by K195 and T217. 266–267 (HK) lines the deamido-NAD(+) pocket.

Belongs to the NAD synthetase family. In terms of assembly, homodimer.

It catalyses the reaction deamido-NAD(+) + NH4(+) + ATP = AMP + diphosphate + NAD(+) + H(+). It participates in cofactor biosynthesis; NAD(+) biosynthesis; NAD(+) from deamido-NAD(+) (ammonia route): step 1/1. Its function is as follows. Catalyzes the ATP-dependent amidation of deamido-NAD to form NAD. Uses ammonia as a nitrogen source. This Vibrio vulnificus (strain CMCP6) protein is NH(3)-dependent NAD(+) synthetase.